Reading from the N-terminus, the 294-residue chain is Diaminopimelate epimerase (294 aa).

Residues Asn-11 and Asn-78 each contribute to the substrate site. Cys-87 serves as the catalytic Proton donor. Residues 88–89, Asn-167, Asn-203, and 221–222 contribute to the substrate site; these read GN and ER. Catalysis depends on Cys-230, which acts as the Proton acceptor. Position 231–232 (231–232) interacts with substrate; the sequence is GT.

It belongs to the diaminopimelate epimerase family. In terms of assembly, homodimer.

Its subcellular location is the cytoplasm. The catalysed reaction is (2S,6S)-2,6-diaminopimelate = meso-2,6-diaminopimelate. It functions in the pathway amino-acid biosynthesis; L-lysine biosynthesis via DAP pathway; DL-2,6-diaminopimelate from LL-2,6-diaminopimelate: step 1/1. Functionally, catalyzes the stereoinversion of LL-2,6-diaminopimelate (L,L-DAP) to meso-diaminopimelate (meso-DAP), a precursor of L-lysine and an essential component of the bacterial peptidoglycan. This chain is Diaminopimelate epimerase, found in Mycolicibacterium paratuberculosis (strain ATCC BAA-968 / K-10) (Mycobacterium paratuberculosis).